Here is a 363-residue protein sequence, read N- to C-terminus: Exopolygalacturonase rpg13 (363 aa).

Positions Met-1–Ala-26 are cleaved as a signal peptide. N-linked (GlcNAc...) asparagine glycans are attached at residues Asn-121, Asn-142, and Asn-150. PbH1 repeat units lie at residues Ala-143 to Arg-173, Ser-174 to Glu-195, Val-197 to Ser-217, Val-227 to Thr-248, and Val-256 to Thr-277. Asp-188 serves as the catalytic Proton donor. Cysteines 190 and 207 form a disulfide. Asn-199 carries an N-linked (GlcNAc...) asparagine glycan. His-211 is a catalytic residue. Residue Asn-321 is glycosylated (N-linked (GlcNAc...) asparagine). Cys-322 and Cys-328 are disulfide-bonded. One copy of the PbH1 6 repeat lies at Cys-328–Gly-354.

It belongs to the glycosyl hydrolase 28 family. N-glycosylated.

The protein resides in the secreted. It carries out the reaction [(1-&gt;4)-alpha-D-galacturonosyl](n) + H2O = alpha-D-galacturonate + [(1-&gt;4)-alpha-D-galacturonosyl](n-1). Its function is as follows. Specific in hydrolyzing the terminal glycosidic bond of polygalacturonic acid and oligogalacturonates. Has no activity towards trigalacturonic acid. The sequence is that of Exopolygalacturonase rpg13 from Rhizopus delemar (strain RA 99-880 / ATCC MYA-4621 / FGSC 9543 / NRRL 43880) (Mucormycosis agent).